Consider the following 426-residue polypeptide: Isovaleryl-CoA dehydrogenase, mitochondrial (426 aa).

Residues 1–32 (MATAAWLLGRRVASWRMRPPLQSLAGLITQRT) constitute a mitochondrion transit peptide. An N6-acetyllysine; alternate mark is found at Lys-58 and Lys-78. Lys-58 and Lys-78 each carry N6-succinyllysine; alternate. FAD-binding positions include 165 to 174 (LAMSEPNAGS) and 198 to 200 (WIT). Position 174 (Ser-174) interacts with substrate. 222–223 (SR) contacts substrate. Position 241 is an N6-acetyllysine (Lys-241). Substrate is bound by residues Tyr-277 and 284–287 (DLER). The Proton acceptor role is filled by Glu-286. Arg-312 provides a ligand contact to FAD. Lys-318 is modified (N6-succinyllysine). FAD-binding positions include Gln-323 and 380–384 (QCLGG). 407–408 (AG) serves as a coordination point for substrate. 409–411 (TSE) serves as a coordination point for FAD.

The protein belongs to the acyl-CoA dehydrogenase family. In terms of assembly, homotetramer. Requires FAD as cofactor.

The protein localises to the mitochondrion matrix. It catalyses the reaction 3-methylbutanoyl-CoA + oxidized [electron-transfer flavoprotein] + H(+) = 3-methylbut-2-enoyl-CoA + reduced [electron-transfer flavoprotein]. It carries out the reaction pentanoyl-CoA + oxidized [electron-transfer flavoprotein] + H(+) = (2E)-pentenoyl-CoA + reduced [electron-transfer flavoprotein]. The catalysed reaction is hexanoyl-CoA + oxidized [electron-transfer flavoprotein] + H(+) = (2E)-hexenoyl-CoA + reduced [electron-transfer flavoprotein]. The enzyme catalyses butanoyl-CoA + oxidized [electron-transfer flavoprotein] + H(+) = (2E)-butenoyl-CoA + reduced [electron-transfer flavoprotein]. Its pathway is amino-acid degradation; L-leucine degradation; (S)-3-hydroxy-3-methylglutaryl-CoA from 3-isovaleryl-CoA: step 1/3. Functionally, catalyzes the conversion of isovaleryl-CoA/3-methylbutanoyl-CoA to 3-methylbut-2-enoyl-CoA as an intermediate step in the leucine (Leu) catabolic pathway. To a lesser extent, is also able to catalyze the oxidation of other saturated short-chain acyl-CoA thioesters as pentanoyl-CoA, hexenoyl-CoA and butenoyl-CoA. The sequence is that of Isovaleryl-CoA dehydrogenase, mitochondrial (IVD) from Bos taurus (Bovine).